Here is a 182-residue protein sequence, read N- to C-terminus: Adenine phosphoribosyltransferase (182 aa).

It belongs to the purine/pyrimidine phosphoribosyltransferase family. Homodimer.

The protein resides in the cytoplasm. It catalyses the reaction AMP + diphosphate = 5-phospho-alpha-D-ribose 1-diphosphate + adenine. Its pathway is purine metabolism; AMP biosynthesis via salvage pathway; AMP from adenine: step 1/1. Catalyzes a salvage reaction resulting in the formation of AMP, that is energically less costly than de novo synthesis. This chain is Adenine phosphoribosyltransferase, found in Pseudomonas syringae pv. syringae (strain B728a).